The primary structure comprises 338 residues: MIEADRLIHAEPQGIEERDEQIDRAMRPKMLDEYTGQDDSRAQLKIFIQAAQNRDEALDHMLIYGPPGLGKTTLAMIVANEMGVNIKSTSGPVLEKAGDLAALLTNLEPGDVLFIDEIHRLSSVVEEILYPAMEDYQLDIMIGEGPAARSIKLDLPPFTLIGATTRAGALTSPLRARFGIPLRLEFYNVKDLSSIVTRSANVLELPIDEAGAIELARRSRGTPRIANRLLRRVRDFAEVKHDGEITKQVAELALDMLDIDSEGFDYMDRKLLLAIIDKFMGGPVGLDNLAAAIGEERETIEDVLEPFLIQQGFIQRTPRGRIATDRAYRHFDIIQPEK.

The interval 4-187 (ADRLIHAEPQ…FGIPLRLEFY (184 aa)) is large ATPase domain (RuvB-L). Residues Arg-27, Gly-68, Lys-71, Thr-72, Thr-73, 134 to 136 (EDY), Arg-177, Tyr-187, and Arg-224 each bind ATP. Residue Thr-72 coordinates Mg(2+). The small ATPAse domain (RuvB-S) stretch occupies residues 188–258 (NVKDLSSIVT…VAELALDMLD (71 aa)). Positions 261–338 (SEGFDYMDRK…RHFDIIQPEK (78 aa)) are head domain (RuvB-H). 3 residues coordinate DNA: Arg-297, Arg-316, and Arg-321.

Belongs to the RuvB family. As to quaternary structure, homohexamer. Forms an RuvA(8)-RuvB(12)-Holliday junction (HJ) complex. HJ DNA is sandwiched between 2 RuvA tetramers; dsDNA enters through RuvA and exits via RuvB. An RuvB hexamer assembles on each DNA strand where it exits the tetramer. Each RuvB hexamer is contacted by two RuvA subunits (via domain III) on 2 adjacent RuvB subunits; this complex drives branch migration. In the full resolvosome a probable DNA-RuvA(4)-RuvB(12)-RuvC(2) complex forms which resolves the HJ.

The protein resides in the cytoplasm. It carries out the reaction ATP + H2O = ADP + phosphate + H(+). Its function is as follows. The RuvA-RuvB-RuvC complex processes Holliday junction (HJ) DNA during genetic recombination and DNA repair, while the RuvA-RuvB complex plays an important role in the rescue of blocked DNA replication forks via replication fork reversal (RFR). RuvA specifically binds to HJ cruciform DNA, conferring on it an open structure. The RuvB hexamer acts as an ATP-dependent pump, pulling dsDNA into and through the RuvAB complex. RuvB forms 2 homohexamers on either side of HJ DNA bound by 1 or 2 RuvA tetramers; 4 subunits per hexamer contact DNA at a time. Coordinated motions by a converter formed by DNA-disengaged RuvB subunits stimulates ATP hydrolysis and nucleotide exchange. Immobilization of the converter enables RuvB to convert the ATP-contained energy into a lever motion, pulling 2 nucleotides of DNA out of the RuvA tetramer per ATP hydrolyzed, thus driving DNA branch migration. The RuvB motors rotate together with the DNA substrate, which together with the progressing nucleotide cycle form the mechanistic basis for DNA recombination by continuous HJ branch migration. Branch migration allows RuvC to scan DNA until it finds its consensus sequence, where it cleaves and resolves cruciform DNA. The polypeptide is Holliday junction branch migration complex subunit RuvB (Shewanella woodyi (strain ATCC 51908 / MS32)).